Reading from the N-terminus, the 867-residue chain is Coiled-coil domain-containing protein 178 (867 aa).

Coiled-coil stretches lie at residues 153–204 (DEKC…KIDS), 233–414 (WHLE…ENQY), 445–470 (ACTK…TNES), and 662–696 (MIFY…KNKF).

The sequence is that of Coiled-coil domain-containing protein 178 (CCDC178) from Homo sapiens (Human).